The primary structure comprises 126 residues: Large ribosomal subunit protein bL12 (126 aa).

It belongs to the bacterial ribosomal protein bL12 family. As to quaternary structure, homodimer. Part of the ribosomal stalk of the 50S ribosomal subunit. Forms a multimeric L10(L12)X complex, where L10 forms an elongated spine to which 2 to 4 L12 dimers bind in a sequential fashion. Binds GTP-bound translation factors.

Forms part of the ribosomal stalk which helps the ribosome interact with GTP-bound translation factors. Is thus essential for accurate translation. The sequence is that of Large ribosomal subunit protein bL12 from Moorella thermoacetica (strain ATCC 39073 / JCM 9320).